A 332-amino-acid chain; its full sequence is Cytochrome c oxidase subunit 2 (332 aa).

The N-terminal stretch at 1-20 (MKIPGSVITLLIGVVITVVS) is a signal peptide. 2 helical membrane-spanning segments follow: residues 48-68 (MMTI…YCLI) and 87-107 (VPLE…LAVY). Residues His-214, Cys-249, Cys-253, and His-257 each contribute to the Cu cation site.

The protein belongs to the cytochrome c oxidase subunit 2 family. Cu cation is required as a cofactor.

It is found in the cell membrane. It catalyses the reaction 4 Fe(II)-[cytochrome c] + O2 + 8 H(+)(in) = 4 Fe(III)-[cytochrome c] + 2 H2O + 4 H(+)(out). Functionally, subunits I and II form the functional core of the enzyme complex. Electrons originating in cytochrome c are transferred via heme a and Cu(A) to the binuclear center formed by heme a3 and Cu(B). This Synechocystis sp. (strain ATCC 27184 / PCC 6803 / Kazusa) protein is Cytochrome c oxidase subunit 2 (ctaC).